Reading from the N-terminus, the 515-residue chain is Putative ribose/galactose/methyl galactoside import ATP-binding protein (515 aa).

ABC transporter domains are found at residues 26 to 262 and 272 to 511; these read LEVA…VGRE and VALG…KIMD. An ATP-binding site is contributed by 58-65; the sequence is GENGAGKS.

Belongs to the ABC transporter superfamily. Carbohydrate importer 2 (CUT2) (TC 3.A.1.2) family.

The protein resides in the cell inner membrane. The enzyme catalyses D-ribose(out) + ATP + H2O = D-ribose(in) + ADP + phosphate + H(+). The catalysed reaction is D-galactose(out) + ATP + H2O = D-galactose(in) + ADP + phosphate + H(+). Part of an ABC transporter complex involved in carbohydrate import. Could be involved in ribose, galactose and/or methyl galactoside import. Responsible for energy coupling to the transport system. In Hahella chejuensis (strain KCTC 2396), this protein is Putative ribose/galactose/methyl galactoside import ATP-binding protein.